Here is a 310-residue protein sequence, read N- to C-terminus: Ribosomal RNA small subunit methyltransferase H (310 aa).

S-adenosyl-L-methionine-binding positions include 32 to 34 (GGH), Asp52, Phe79, Asp100, and Gln107.

This sequence belongs to the methyltransferase superfamily. RsmH family.

It localises to the cytoplasm. It carries out the reaction cytidine(1402) in 16S rRNA + S-adenosyl-L-methionine = N(4)-methylcytidine(1402) in 16S rRNA + S-adenosyl-L-homocysteine + H(+). In terms of biological role, specifically methylates the N4 position of cytidine in position 1402 (C1402) of 16S rRNA. The polypeptide is Ribosomal RNA small subunit methyltransferase H (Bacillus cereus (strain AH187)).